The following is an 819-amino-acid chain: MDKEKDHEVEWLEAQKIEISVDLLAAAKQHLLFLETVDRNRWLYDGPALEKAIYRYNACWLPLLVKYSESSSVSEGSLVPPLDCEWIWHCHRLNPVRYNSDCEQFYGRVLDNSGVLSSVDGNCKLKTEDLWKRLYPDEPYELDLDNIDLEDISEKSSALEKCTKYDLVSAVKRQSPFYYQVSRSHVNSDIFLQEAVARYKGFLYLIKMNRERSLKRFCVPTYDVDLIWHTHQLHPVSYCDDMVKLIGKVLEHDDTDSDRGKGKKLDTGFSKTTAQWEETFGTRYWKAGAMHRGKTPVPVTNSPYASDVLVKDPTAKDDFQNLIQFPEVEVVEVLLEIIGVRNLPDGHKGKVSVMFSKTQPDSLFNAERRLTILSEVGEKQVATFQCEPTGELVFKLISCSPSKIPVSREPKNLGFASLSLKEFLFPVITQLSVEKWLELTPSKGSQTDTKPISLRVAVSFTPPVRSPSVLHMVQSRPSCKGSCFFPIIGKSRLAKSSTHIVDETQTEVITLQIRNSADGGILKDDQRQVMGVTDSGETRVLAVYTGSFWSLLDSKWSLKQINASTADNPLFEILGPRVVKIFSGRKLDYEPKHCANLRSDLDFMTLVEFSKQHPYGKTVGLVDMRFGSIEAKENWLLLPGIVSAFILHTVLKKGGSEGFNVTTKDIKEESKQTKLVAATENNVNANSTNVETQTAITAPKKGSGCGGGCSGECGNMVKAANASGCGSSCSGECGDMVKSAANASGCGSGCSGECGNMVKAANASGGGYGARCKAAKASGCGGGCGGGCGGGCGDMVKSVNASGCGGGCNGECGNMVKAA.

Its function is as follows. Plays a regulatory role in abscisic acid (ABA) signaling and tolerance to abiotic stress during germination. May be involved in the regulation of the ABI transcriptional factors. The polypeptide is Glycine-rich domain-containing protein 1 (Arabidopsis thaliana (Mouse-ear cress)).